Here is a 412-residue protein sequence, read N- to C-terminus: Protein arginine N-methyltransferase 2 (412 aa).

Residues 48–65 (EKNRNGDKEFRESTDDNK) are compositionally biased toward basic and acidic residues. Disordered stretches follow at residues 48 to 69 (EKNR…TSNT) and 169 to 189 (SVQT…DDAT). Phosphoserine is present on residues Ser181 and Ser184. Residues 189–412 (TAANQQVYLK…YYYHPRITFA (224 aa)) form the RMT2 domain. S-adenosyl-L-methionine is bound by residues Tyr196, Met226, 250–255 (FGMGII), 271–273 (EAH), 298–299 (WQ), and Asp319.

It belongs to the class I-like SAM-binding methyltransferase superfamily. RMT2 methyltransferase family. As to quaternary structure, monomer. Interacts with nucleoporins NUP49, NUP57 and NUP100.

It is found in the cytoplasm. The protein localises to the nucleus. Functionally, S-adenosyl-L-methionine-dependent protein-arginine N-methyltransferase that methylates the delta-nitrogen atom of arginine residues to form N5-methylarginine (type IV) in target proteins. Monomethylates ribosomal protein L12 (RPL12A/RPL12B) at 'Arg-67'. The polypeptide is Protein arginine N-methyltransferase 2 (Saccharomyces cerevisiae (strain ATCC 204508 / S288c) (Baker's yeast)).